Reading from the N-terminus, the 391-residue chain is UPF0229 protein CA_C0580 (391 aa).

Disordered regions lie at residues 1-20 (MAIF…TIGD) and 75-109 (VGSG…NSEG). A compositionally biased stretch (gly residues) spans 96-106 (GSKGKGKGAGN).

It belongs to the UPF0229 family.

The protein is UPF0229 protein CA_C0580 of Clostridium acetobutylicum (strain ATCC 824 / DSM 792 / JCM 1419 / IAM 19013 / LMG 5710 / NBRC 13948 / NRRL B-527 / VKM B-1787 / 2291 / W).